We begin with the raw amino-acid sequence, 271 residues long: MLSSTDLVQAVTADLGKIRETAPLVLSLTNSVVQPLTANLLLAIGAVPAMLNDAEEAVDMLRSGTGALLVNLGTVTREQGAAMQTAVREANRLNIPWVLDPVAVGALSLRTRLAGQLKEQSPRIIRGNASEIMALAGYSSVTKGPESTSSSADALHAARELALHTGAAVLVTGRTDYSTDGRQVTATENGHAMMSRVTGVGCSMGALSAACAAVSPTPLQAAVSTAVLMGIAGEMAFEQSPSPGSFAVSLLDSLYALSPEDVVRRARFLSL.

A substrate-binding site is contributed by methionine 50. 2 residues coordinate ATP: arginine 126 and threonine 172. Glycine 199 contacts substrate.

Belongs to the Thz kinase family. Mg(2+) serves as cofactor.

It catalyses the reaction 5-(2-hydroxyethyl)-4-methylthiazole + ATP = 4-methyl-5-(2-phosphooxyethyl)-thiazole + ADP + H(+). It functions in the pathway cofactor biosynthesis; thiamine diphosphate biosynthesis; 4-methyl-5-(2-phosphoethyl)-thiazole from 5-(2-hydroxyethyl)-4-methylthiazole: step 1/1. Functionally, catalyzes the phosphorylation of the hydroxyl group of 4-methyl-5-beta-hydroxyethylthiazole (THZ). This Akkermansia muciniphila (strain ATCC BAA-835 / DSM 22959 / JCM 33894 / BCRC 81048 / CCUG 64013 / CIP 107961 / Muc) protein is Hydroxyethylthiazole kinase.